A 244-amino-acid chain; its full sequence is rRNA adenine N-6-methyltransferase (244 aa).

Residues Asn11, Ile13, Gly38, Glu59, Asp84, and Ser101 each contribute to the S-adenosyl-L-methionine site.

Belongs to the class I-like SAM-binding methyltransferase superfamily. rRNA adenine N(6)-methyltransferase family.

Functionally, involved in erythromycin resistance. This Lysinibacillus sphaericus (Bacillus sphaericus) protein is rRNA adenine N-6-methyltransferase (ermG).